The following is a 157-amino-acid chain: Transmembrane protein 50A (157 aa).

The residue at position 2 (S2) is an N-acetylserine. Residue S2 is modified to Phosphoserine. 4 helical membrane passes run 26–46, 58–78, 95–115, and 126–146; these read IAAG…AVIY, ACGV…NGQV, IWLF…MWIL, and IVYP…GGLV.

It belongs to the UPF0220 family.

Its subcellular location is the membrane. The sequence is that of Transmembrane protein 50A (TMEM50A) from Homo sapiens (Human).